We begin with the raw amino-acid sequence, 234 residues long: 7-carboxy-7-deazaguanine synthase (234 aa).

Residues 1–28 (MPLNCDTKTAGEISSSIPSGSGSHQPAA) form a disordered region. The span at 13–23 (ISSSIPSGSGS) shows a compositional bias: low complexity. Substrate-binding positions include 42–44 (LQG) and arginine 57. Residues 48–234 (TSGYPTIFIR…LQLHKFIGLP (187 aa)) form the Radical SAM core domain. The [4Fe-4S] cluster site is built by cysteine 61, cysteine 65, and cysteine 68. Threonine 70 is a Mg(2+) binding site. A substrate-binding site is contributed by threonine 100. Glycine 102 is a binding site for S-adenosyl-L-methionine. Proline 234 provides a ligand contact to substrate.

This sequence belongs to the radical SAM superfamily. 7-carboxy-7-deazaguanine synthase family. Homodimer. The cofactor is [4Fe-4S] cluster. S-adenosyl-L-methionine is required as a cofactor. Requires Mg(2+) as cofactor.

It carries out the reaction 6-carboxy-5,6,7,8-tetrahydropterin + H(+) = 7-carboxy-7-deazaguanine + NH4(+). It participates in purine metabolism; 7-cyano-7-deazaguanine biosynthesis. Its function is as follows. Catalyzes the complex heterocyclic radical-mediated conversion of 6-carboxy-5,6,7,8-tetrahydropterin (CPH4) to 7-carboxy-7-deazaguanine (CDG), a step common to the biosynthetic pathways of all 7-deazapurine-containing compounds. In Methanospirillum hungatei JF-1 (strain ATCC 27890 / DSM 864 / NBRC 100397 / JF-1), this protein is 7-carboxy-7-deazaguanine synthase.